The primary structure comprises 126 residues: Large ribosomal subunit protein uL29 (126 aa).

This sequence belongs to the universal ribosomal protein uL29 family.

This is Large ribosomal subunit protein uL29 (rpl35) from Dictyostelium discoideum (Social amoeba).